A 291-amino-acid chain; its full sequence is 4-hydroxy-tetrahydrodipicolinate synthase (291 aa).

T47 is a binding site for pyruvate. The active-site Proton donor/acceptor is Y134. Catalysis depends on K162, which acts as the Schiff-base intermediate with substrate. I205 is a pyruvate binding site.

This sequence belongs to the DapA family. In terms of assembly, homotetramer; dimer of dimers.

Its subcellular location is the cytoplasm. It carries out the reaction L-aspartate 4-semialdehyde + pyruvate = (2S,4S)-4-hydroxy-2,3,4,5-tetrahydrodipicolinate + H2O + H(+). The protein operates within amino-acid biosynthesis; L-lysine biosynthesis via DAP pathway; (S)-tetrahydrodipicolinate from L-aspartate: step 3/4. Functionally, catalyzes the condensation of (S)-aspartate-beta-semialdehyde [(S)-ASA] and pyruvate to 4-hydroxy-tetrahydrodipicolinate (HTPA). This Methanospirillum hungatei JF-1 (strain ATCC 27890 / DSM 864 / NBRC 100397 / JF-1) protein is 4-hydroxy-tetrahydrodipicolinate synthase.